We begin with the raw amino-acid sequence, 643 residues long: 1-deoxy-D-xylulose-5-phosphate synthase (643 aa).

Residues His-78 and 119-121 (AHS) each bind thiamine diphosphate. Asp-150 provides a ligand contact to Mg(2+). Residues 151-152 (GS), Asn-179, Tyr-288, and Glu-370 each bind thiamine diphosphate. A Mg(2+)-binding site is contributed by Asn-179.

The protein belongs to the transketolase family. DXPS subfamily. Homodimer. It depends on Mg(2+) as a cofactor. The cofactor is thiamine diphosphate.

It catalyses the reaction D-glyceraldehyde 3-phosphate + pyruvate + H(+) = 1-deoxy-D-xylulose 5-phosphate + CO2. It functions in the pathway metabolic intermediate biosynthesis; 1-deoxy-D-xylulose 5-phosphate biosynthesis; 1-deoxy-D-xylulose 5-phosphate from D-glyceraldehyde 3-phosphate and pyruvate: step 1/1. Functionally, catalyzes the acyloin condensation reaction between C atoms 2 and 3 of pyruvate and glyceraldehyde 3-phosphate to yield 1-deoxy-D-xylulose-5-phosphate (DXP). In Brucella abortus (strain 2308), this protein is 1-deoxy-D-xylulose-5-phosphate synthase.